The following is a 63-amino-acid chain: Large ribosomal subunit protein bL28 (63 aa).

It belongs to the bacterial ribosomal protein bL28 family.

The chain is Large ribosomal subunit protein bL28 from Desulfitobacterium hafniense (strain DSM 10664 / DCB-2).